The following is a 237-amino-acid chain: 1-(5-phosphoribosyl)-5-[(5-phosphoribosylamino)methylideneamino] imidazole-4-carboxamide isomerase (237 aa).

Asp8 serves as the catalytic Proton acceptor. Residue Asp128 is the Proton donor of the active site.

Belongs to the HisA/HisF family.

It is found in the cytoplasm. The catalysed reaction is 1-(5-phospho-beta-D-ribosyl)-5-[(5-phospho-beta-D-ribosylamino)methylideneamino]imidazole-4-carboxamide = 5-[(5-phospho-1-deoxy-D-ribulos-1-ylimino)methylamino]-1-(5-phospho-beta-D-ribosyl)imidazole-4-carboxamide. Its pathway is amino-acid biosynthesis; L-histidine biosynthesis; L-histidine from 5-phospho-alpha-D-ribose 1-diphosphate: step 4/9. This chain is 1-(5-phosphoribosyl)-5-[(5-phosphoribosylamino)methylideneamino] imidazole-4-carboxamide isomerase, found in Gemmatimonas aurantiaca (strain DSM 14586 / JCM 11422 / NBRC 100505 / T-27).